The chain runs to 447 residues: Argininosuccinate synthase (447 aa).

ATP is bound by residues alanine 17–serine 25 and alanine 43. Tyrosine 99 lines the L-citrulline pocket. ATP is bound by residues glycine 129 and threonine 131. L-aspartate-binding residues include threonine 131, asparagine 135, and aspartate 136. Asparagine 135 serves as a coordination point for L-citrulline. ATP is bound at residue aspartate 136. 2 residues coordinate L-citrulline: arginine 139 and serine 192. ATP is bound at residue aspartate 194. Residues threonine 201, glutamate 203, and glutamate 280 each contribute to the L-citrulline site.

It belongs to the argininosuccinate synthase family. Type 2 subfamily. Homotetramer.

Its subcellular location is the cytoplasm. It catalyses the reaction L-citrulline + L-aspartate + ATP = 2-(N(omega)-L-arginino)succinate + AMP + diphosphate + H(+). It participates in amino-acid biosynthesis; L-arginine biosynthesis; L-arginine from L-ornithine and carbamoyl phosphate: step 2/3. The protein is Argininosuccinate synthase of Salmonella schwarzengrund (strain CVM19633).